The primary structure comprises 130 residues: Secreted RxLR effector protein 68 (130 aa).

A signal peptide spans 1–29 (MRCVCASIRRTRIIEFLMFFALSSSTASC). The N-linked (GlcNAc...) asparagine glycan is linked to Asn-36. The RxLR signature appears at 45–48 (RWLR).

The protein belongs to the RxLR effector family.

Its subcellular location is the secreted. It localises to the host cytoplasm. The protein localises to the host nucleus. Effector that acts as a broad suppressor of cell death to interrupt plant immunity. Inhibits cell death induced by cell death-inducing proteins, including the PAMP elicitor INF1 from P.infestans. This is Secreted RxLR effector protein 68 from Plasmopara viticola (Downy mildew of grapevine).